The primary structure comprises 369 residues: Glutamate 5-kinase (369 aa).

K10 lines the ATP pocket. Substrate-binding residues include S50, D137, and N149. Residues 169–170 and 210–216 contribute to the ATP site; these read TD and TGGMVTK. One can recognise a PUA domain in the interval 276-349; it reads EGSIFIDEGA…GKHSEEMLAT (74 aa).

The protein belongs to the glutamate 5-kinase family.

The protein localises to the cytoplasm. It catalyses the reaction L-glutamate + ATP = L-glutamyl 5-phosphate + ADP. It participates in amino-acid biosynthesis; L-proline biosynthesis; L-glutamate 5-semialdehyde from L-glutamate: step 1/2. Functionally, catalyzes the transfer of a phosphate group to glutamate to form L-glutamate 5-phosphate. The sequence is that of Glutamate 5-kinase from Desulfitobacterium hafniense (strain Y51).